The sequence spans 65 residues: Large ribosomal subunit protein bL35 (65 aa).

It belongs to the bacterial ribosomal protein bL35 family.

This chain is Large ribosomal subunit protein bL35, found in Prochlorococcus marinus (strain NATL1A).